We begin with the raw amino-acid sequence, 198 residues long: Recombination protein RecR (198 aa).

A C4-type zinc finger spans residues 57-72 (CEKCNTFTEAQICEVC). One can recognise a Toprim domain in the interval 80–175 (TLLCVVETPA…SVTRLARGVP (96 aa)).

The protein belongs to the RecR family.

In terms of biological role, may play a role in DNA repair. It seems to be involved in an RecBC-independent recombinational process of DNA repair. It may act with RecF and RecO. The polypeptide is Recombination protein RecR (Paraburkholderia phymatum (strain DSM 17167 / CIP 108236 / LMG 21445 / STM815) (Burkholderia phymatum)).